Reading from the N-terminus, the 258-residue chain is Diacetyl reductase [(S)-acetoin forming] (258 aa).

Position 8 to 32 (8 to 32 (LVTGGAQGIGFKIAERLVEDGFKVA)) interacts with NAD(+). A substrate-binding site is contributed by Ser141. Tyr154 (proton acceptor) is an active-site residue. Lys158 is a catalytic residue.

It belongs to the short-chain dehydrogenases/reductases (SDR) family.

It catalyses the reaction (S)-acetoin + NAD(+) = diacetyl + NADH + H(+). In terms of biological role, catalyzes the irreversible reduction of 2,3-butanediol to (S)-acetoin in the presence of NADH. This Staphylococcus aureus (strain Mu50 / ATCC 700699) protein is Diacetyl reductase [(S)-acetoin forming] (butA).